Reading from the N-terminus, the 207-residue chain is Na(+)-translocating ferredoxin:NAD(+) oxidoreductase complex subunit G (207 aa).

The helical transmembrane segment at 18–38 threads the bilayer; the sequence is GLILFVISAVAACALALTNYV. T185 is subject to FMN phosphoryl threonine.

This sequence belongs to the RnfG family. As to quaternary structure, the complex is composed of six subunits: RnfA, RnfB, RnfC, RnfD, RnfE and RnfG. FMN serves as cofactor.

It is found in the cell membrane. It carries out the reaction 2 reduced [2Fe-2S]-[ferredoxin] + Na(+)(in) + NAD(+) + H(+) = 2 oxidized [2Fe-2S]-[ferredoxin] + Na(+)(out) + NADH. Part of a membrane-bound complex that couples electron transfer with translocation of ions across the membrane. Couples electron transfer from reduced ferredoxin to NAD(+) with electrogenic movement of Na(+) out of the cell. Involved in caffeate respiration. The chain is Na(+)-translocating ferredoxin:NAD(+) oxidoreductase complex subunit G from Acetobacterium woodii (strain ATCC 29683 / DSM 1030 / JCM 2381 / KCTC 1655 / WB1).